The chain runs to 183 residues: uncharacterized protein (183 aa).

This sequence belongs to the herpesviridae US1 family.

This is an uncharacterized protein from Human cytomegalovirus (strain AD169) (HHV-5).